Consider the following 335-residue polypeptide: DNA-directed RNA polymerase subunit alpha (335 aa).

The tract at residues 1–233 is alpha N-terminal domain (alpha-NTD); it reads MVREKITVST…DLFIPFLHME (233 aa). Positions 265–335 are alpha C-terminal domain (alpha-CTD); the sequence is KEIALKSIFI…KQLVIFLPKK (71 aa).

This sequence belongs to the RNA polymerase alpha chain family. In terms of assembly, in plastids the minimal PEP RNA polymerase catalytic core is composed of four subunits: alpha, beta, beta', and beta''. When a (nuclear-encoded) sigma factor is associated with the core the holoenzyme is formed, which can initiate transcription.

It localises to the plastid. Its subcellular location is the chloroplast. The enzyme catalyses RNA(n) + a ribonucleoside 5'-triphosphate = RNA(n+1) + diphosphate. Functionally, DNA-dependent RNA polymerase catalyzes the transcription of DNA into RNA using the four ribonucleoside triphosphates as substrates. This chain is DNA-directed RNA polymerase subunit alpha, found in Coffea arabica (Arabian coffee).